Reading from the N-terminus, the 1577-residue chain is MILLHFVYSLWALLLIPLINAEEFTPKVTKTIAQDSFEILSFDDSNTLIRKQDASVTISFDDGETWEKVEGIEDEITWIYIDPFNRHDRAVATSMYESRLYITNDQGKSWERITLPDSEKNISSRGCYIETHPLNKNYFLAKCNYCEKTEVDNEENSGDEEGAPVIFNITHCTDKVFASNDGGKSFSEIKSSLERNENSAISISDCGFAKTGKDSDLESSDTSIICLFQNMQLIMDEFSSPYTESKLVLTTDWGKSLKEFDQFKDKVVNGYRILKSHMVVITQGDRYNDMSSMDVWVSNDLSNFKMAYMPTQLRHSMQGEIYEDAMGRIILPMSRERSDQEEDKGIVSEILISDSQGLKFSPIPWTANEVFGYINLYQPTYLKGTMIASLYPLSRRRNRKGKAKGVKNKGVTKISVDNGLTWTVLKVVDPDNADSFDCDITDFENCSLQNMFYTREGSTPTAGILMTTGIVGDGSVFDWGDQRTFISRDGGLTWKLAFDFPCLYAVGDYGNVIVAIPYNADEDDDPQSEFYYSLDQGKTWTEYQLETTIYPNEVMNTTPDGSGAKFILNGFTLAHMDGTTNFIYAIDFSTAFNDKTCEENDFEDWNLAEGKCVNGVKYKIRRRKQDAQCLVKKVFEDLQLFETACDKCTEADYECAFEFVRDATGKCVPDYNLIVLSDVCDKTKKKTVPVKPLQLVKGDKCKKPMTVKSVDISCEGVPKKGTNDKEIVVTENKFDFKIQFYQYFDTVTDESLLMINSRGEAYISHDGGQTIRRFDSNGETIIEVVFNPYYNSSAYLFGSKGSIFSTHDRGYSFMTAKLPEARQLGMPLDFNAKAQDTFIYYGGKNCESILSPECHAVAYLTNDGGETFTEMLDNAIHCEFAGSLFKYPSNEDMVMCQVKEKSSQTRSLVSSTDFFQDDKNTVFENIIGYLSTGGYIIVAVPHENNELRAYVTIDGTEFAEAKFPYDEDVGKQEAFTILESEKGSIFLHLATNLVPGRDFGNLLKSNSNGTSFVTLEHAVNRNTFGYVDFEKIQGLEGIILTNIVSNSDKVAENKEDKQLKTKITFNEGSDWNFLKPPKRDSEGKKFSCSSKSLDECSLHLHGYTERKDIRDTYSSGSALGMMFGVGNVGPNLLPYKECSTFFTTDGGETWAEVKKTPHQWEYGDHGGILVLVPENSETDSISYSTDFGKTWKDYKFCADKVLVKDITTVPRDSALRFLLFGEAADIGGSSFRTYTIDFRNIFERQCDFDITGKESADYKYSPLSSKSNCLFGHQTEFLRKTDENCFIGNIPLSEFSRNIKNCSCTRQDFECDYNFYKANDGTCKLVKGLSPANAADVCKKEPDLIEYFESSGYRKIPLSTCEGGLKLDAPSSPHACPGKEKEFKEKYSVSAGPFAFIFISILLIIFFAAWFVYDRGIRRNGGFARFGEIRLGDDGLIENNNTDRVVNNIVKSGFYVFSNIGSLLQHTKTNIAHVISKIRGRFGNRTGPSYSSLIHDQFLDEADDLLAGHDEDANDLSSFMDQGSNFEIEEDDVPTLEEEHTSYTDQPTTTDVPDALPEGNEENIDRPDSTAPSNENQ.

An N-terminal signal peptide occupies residues methionine 1–alanine 21. At glutamate 22–alanine 1391 the chain is on the lumenal side. BNR repeat units lie at residues isoleucine 58–lysine 68 and tyrosine 101–glutamate 111. N-linked (GlcNAc...) asparagine glycosylation is found at asparagine 121 and asparagine 168. BNR repeat units lie at residues serine 179–serine 187 and isoleucine 414–threonine 423. Asparagine 445 carries N-linked (GlcNAc...) asparagine glycosylation. BNR repeat units follow at residues phenylalanine 485–lysine 495, tyrosine 531–threonine 541, and tyrosine 762–isoleucine 771. Residue asparagine 791 is glycosylated (N-linked (GlcNAc...) asparagine). One copy of the BNR 8 repeat lies at tyrosine 859 to threonine 869. Residue asparagine 1008 is glycosylated (N-linked (GlcNAc...) asparagine). BNR repeat units lie at residues phenylalanine 1141 to tryptophan 1150 and tyrosine 1183 to lysine 1192. Residue asparagine 1301 is glycosylated (N-linked (GlcNAc...) asparagine). Residues glycine 1392–valine 1412 traverse the membrane as a helical segment. The Cytoplasmic segment spans residues tyrosine 1413–glutamine 1577. Residues aspartate 1531–glutamine 1577 are disordered.

It belongs to the VPS10-related sortilin family.

The protein localises to the golgi apparatus. It is found in the trans-Golgi network membrane. The protein resides in the prevacuolar compartment membrane. Functions as a sorting receptor in the Golgi compartment required for the intracellular sorting and delivery of soluble vacuolar proteins, like carboxypeptidase Y (CPY) and proteinase A. Executes multiple rounds of sorting by cycling between the late Golgi and a prevacuolar endosome-like compartment. Binds the Golgi-modified P2 form of CPY, and this interaction is dependent on the presence of an intact CPY vacuolar protein sorting signal. In Saccharomyces cerevisiae (strain JAY291) (Baker's yeast), this protein is Vacuolar protein sorting/targeting protein PEP1 (PEP1).